Here is a 324-residue protein sequence, read N- to C-terminus: Probable 6-phosphogluconolactonase 4, chloroplastic (324 aa).

The N-terminal 61 residues, 1 to 61 (MSVSAAVAAA…RAPAMATDCA (61 aa)), are a transit peptide targeting the chloroplast. The segment at 20-43 (RRRSPPASRVAATSRGRPFSSGPH) is disordered. Residues 24 to 34 (PPASRVAATSR) show a composition bias toward low complexity.

This sequence belongs to the glucosamine/galactosamine-6-phosphate isomerase family. 6-phosphogluconolactonase subfamily.

The protein resides in the plastid. It localises to the chloroplast. The enzyme catalyses 6-phospho-D-glucono-1,5-lactone + H2O = 6-phospho-D-gluconate + H(+). The protein operates within carbohydrate degradation; pentose phosphate pathway; D-ribulose 5-phosphate from D-glucose 6-phosphate (oxidative stage): step 2/3. Its function is as follows. Hydrolysis of 6-phosphogluconolactone to 6-phosphogluconate. The protein is Probable 6-phosphogluconolactonase 4, chloroplastic of Oryza sativa subsp. indica (Rice).